The following is a 388-amino-acid chain: Lipid-A-disaccharide synthase (388 aa).

Belongs to the LpxB family.

It carries out the reaction a lipid X + a UDP-2-N,3-O-bis[(3R)-3-hydroxyacyl]-alpha-D-glucosamine = a lipid A disaccharide + UDP + H(+). It participates in bacterial outer membrane biogenesis; LPS lipid A biosynthesis. Functionally, condensation of UDP-2,3-diacylglucosamine and 2,3-diacylglucosamine-1-phosphate to form lipid A disaccharide, a precursor of lipid A, a phosphorylated glycolipid that anchors the lipopolysaccharide to the outer membrane of the cell. The polypeptide is Lipid-A-disaccharide synthase (Burkholderia mallei (strain NCTC 10247)).